Consider the following 147-residue polypeptide: Myoglobin (147 aa).

Positions 2-141 (HDAELVLKCW…VIGDIDTYYK (140 aa)) constitute a Globin domain. His-60 is a binding site for nitrite. His-60 contacts O2. His-89 serves as a coordination point for heme b.

It belongs to the globin family. In terms of assembly, monomeric.

Its subcellular location is the cytoplasm. The protein localises to the sarcoplasm. It carries out the reaction Fe(III)-heme b-[protein] + nitric oxide + H2O = Fe(II)-heme b-[protein] + nitrite + 2 H(+). The enzyme catalyses H2O2 + AH2 = A + 2 H2O. Monomeric heme protein which primary function is to store oxygen and facilitate its diffusion within muscle tissues. Reversibly binds oxygen through a pentacoordinated heme iron and enables its timely and efficient release as needed during periods of heightened demand. Depending on the oxidative conditions of tissues and cells, and in addition to its ability to bind oxygen, it also has a nitrite reductase activity whereby it regulates the production of bioactive nitric oxide. Under stress conditions, like hypoxia and anoxia, it also protects cells against reactive oxygen species thanks to its pseudoperoxidase activity. This is Myoglobin (mb) from Cyprinus carpio (Common carp).